Reading from the N-terminus, the 69-residue chain is Putative membrane protein insertion efficiency factor (69 aa).

It belongs to the UPF0161 family.

It is found in the cell membrane. In terms of biological role, could be involved in insertion of integral membrane proteins into the membrane. The protein is Putative membrane protein insertion efficiency factor of Clostridium botulinum (strain Kyoto / Type A2).